A 42-amino-acid chain; its full sequence is Putative protein RNF216-like (42 aa).

This Homo sapiens (Human) protein is Putative protein RNF216-like (RNF216P1).